The sequence spans 113 residues: UPF0342 protein SZO_10960 (113 aa).

Belongs to the UPF0342 family.

The chain is UPF0342 protein SZO_10960 from Streptococcus equi subsp. zooepidemicus (strain H70).